Consider the following 758-residue polypeptide: Spastin (758 aa).

Residues 1–103 (MVRTKNQSSS…SPRSGHHHSY (103 aa)) form a disordered region. Residues 1-121 (MVRTKNQSSS…KQNLYVVSFP (121 aa)) lie on the Cytoplasmic side of the membrane. The required for localization to punctate cytoplasmic foci stretch occupies residues 1-210 (MVRTKNQSSS…RPIQPLEMAA (210 aa)). 4 stretches are compositionally biased toward low complexity: residues 8–28 (SSSS…SSGA), 43–58 (RSSS…AGGS), 66–76 (SSNRRSPGSSP), and 85–95 (TDDLTPTTCSP). Residues 122–142 (IIFLFNVLRSLIYQLFCIFRY) constitute an intramembrane region (helical). Residues 143–758 (LYGASTKVIY…WSQDYGDITI (616 aa)) are Cytoplasmic-facing. 2 stretches are compositionally biased toward polar residues: residues 169 to 180 (SKEQQQSLNHPS) and 189 to 198 (QEQQLSNQPQ). Residues 169–202 (SKEQQQSLNHPSELNREGDGQEQQLSNQPQRFRP) form a disordered region. The segment at 208–758 (MAANRPGGGY…WSQDYGDITI (551 aa)) is sufficient for interaction with microtubules and microtubule severing. The region spanning 233–308 (HRRAFEYISK…SMARDRLHFL (76 aa)) is the MIT domain. Residues 353–454 (RVRSSGYGPK…GPSGSGASTP (102 aa)) form a disordered region. 2 stretches are compositionally biased toward polar residues: residues 390 to 406 (NKSQ…TSVG) and 425 to 454 (QFSS…ASTP). The segment at 443–455 (NNGPSGSGASTPV) is required for interaction with microtubules. An ATP-binding site is contributed by 523–530 (GPPGNGKT).

The protein belongs to the AAA ATPase family. Spastin subfamily. Homohexamer. The homohexamer is stabilized by ATP-binding. The homohexamer may adopt a ring conformation through which microtubules pass prior to being severed. Interacts with microtubules. Interacts with atl; may be involved in microtubule dynamics.

Its subcellular location is the membrane. It localises to the cytoplasm. The protein resides in the cytoskeleton. The protein localises to the microtubule organizing center. It is found in the centrosome. Its subcellular location is the chromosome. It localises to the lipid droplet. The enzyme catalyses n ATP + n H2O + a microtubule = n ADP + n phosphate + (n+1) alpha/beta tubulin heterodimers.. Its function is as follows. ATP-dependent microtubule severing protein. Stimulates microtubule minus-end depolymerization and poleward microtubule flux in the mitotic spindle. Regulates microtubule stability in the neuromuscular junction synapse. Involved in lipid metabolism by regulating the size and distribution of lipid droplets. Involved in axon regeneration by regulating microtubule severing. This chain is Spastin, found in Drosophila sechellia (Fruit fly).